The following is a 429-amino-acid chain: Enolase (429 aa).

Glutamine 167 lines the (2R)-2-phosphoglycerate pocket. Glutamate 209 (proton donor) is an active-site residue. Aspartate 246, glutamate 289, and aspartate 316 together coordinate Mg(2+). Lysine 341, arginine 370, serine 371, and lysine 392 together coordinate (2R)-2-phosphoglycerate. The active-site Proton acceptor is the lysine 341.

This sequence belongs to the enolase family. In terms of assembly, component of the RNA degradosome, a multiprotein complex involved in RNA processing and mRNA degradation. Requires Mg(2+) as cofactor.

Its subcellular location is the cytoplasm. The protein resides in the secreted. The protein localises to the cell surface. It carries out the reaction (2R)-2-phosphoglycerate = phosphoenolpyruvate + H2O. It participates in carbohydrate degradation; glycolysis; pyruvate from D-glyceraldehyde 3-phosphate: step 4/5. Functionally, catalyzes the reversible conversion of 2-phosphoglycerate (2-PG) into phosphoenolpyruvate (PEP). It is essential for the degradation of carbohydrates via glycolysis. The sequence is that of Enolase from Pseudomonas putida (strain ATCC 47054 / DSM 6125 / CFBP 8728 / NCIMB 11950 / KT2440).